The sequence spans 75 residues: Exodeoxyribonuclease 7 small subunit (75 aa).

The protein belongs to the XseB family. As to quaternary structure, heterooligomer composed of large and small subunits.

The protein localises to the cytoplasm. The enzyme catalyses Exonucleolytic cleavage in either 5'- to 3'- or 3'- to 5'-direction to yield nucleoside 5'-phosphates.. In terms of biological role, bidirectionally degrades single-stranded DNA into large acid-insoluble oligonucleotides, which are then degraded further into small acid-soluble oligonucleotides. This is Exodeoxyribonuclease 7 small subunit from Geobacter sp. (strain M21).